The following is a 140-amino-acid chain: Sex-regulated protein janus-B (140 aa).

Arg-42 lines the substrate pocket. The Proton acceptor role is filled by His-69. 110–112 (SRT) provides a ligand contact to substrate.

It belongs to the janus family.

Its function is as follows. JanA and janB regulate somatic sex differentiation. The chain is Sex-regulated protein janus-B (janB) from Drosophila orena (Fruit fly).